The primary structure comprises 31 residues: U6-ctenitoxin-Co1a (31 aa).

2 disulfide bridges follow: cysteine 2/cysteine 18 and cysteine 9/cysteine 23.

As to expression, expressed by the venom gland.

It localises to the secreted. Antagonist of L-type calcium channels (Cav1/CACNA1). This Ctenus ornatus (Brazilian spider) protein is U6-ctenitoxin-Co1a.